Reading from the N-terminus, the 72-residue chain is Translation initiation factor IF-1 (72 aa).

The S1-like domain maps to Met1–Ser72.

It belongs to the IF-1 family. Component of the 30S ribosomal translation pre-initiation complex which assembles on the 30S ribosome in the order IF-2 and IF-3, IF-1 and N-formylmethionyl-tRNA(fMet); mRNA recruitment can occur at any time during PIC assembly.

Its subcellular location is the cytoplasm. Its function is as follows. One of the essential components for the initiation of protein synthesis. Stabilizes the binding of IF-2 and IF-3 on the 30S subunit to which N-formylmethionyl-tRNA(fMet) subsequently binds. Helps modulate mRNA selection, yielding the 30S pre-initiation complex (PIC). Upon addition of the 50S ribosomal subunit IF-1, IF-2 and IF-3 are released leaving the mature 70S translation initiation complex. This is Translation initiation factor IF-1 from Malacoplasma penetrans (strain HF-2) (Mycoplasma penetrans).